Consider the following 273-residue polypeptide: Undecaprenyl-diphosphatase (273 aa).

Transmembrane regions (helical) follow at residues 48–68, 89–109, 116–136, 152–172, 193–213, 222–242, and 252–272; these read AANT…VVVF, LTLL…VLFE, LFST…MIVA, ITYK…WPGF, ADFT…LSLL, ADIP…LLAI, and IRLV…YFLY.

Belongs to the UppP family.

The protein resides in the cell membrane. The enzyme catalyses di-trans,octa-cis-undecaprenyl diphosphate + H2O = di-trans,octa-cis-undecaprenyl phosphate + phosphate + H(+). In terms of biological role, catalyzes the dephosphorylation of undecaprenyl diphosphate (UPP). Confers resistance to bacitracin. The sequence is that of Undecaprenyl-diphosphatase from Geobacillus thermodenitrificans (strain NG80-2).